The following is an 844-amino-acid chain: Translation initiation factor IF-2 (844 aa).

Basic and acidic residues predominate over residues 1 to 11; that stretch reads MTEDVKADAPK. Disordered stretches follow at residues 1–48 and 79–249; these read MTED…VKTD and RLEA…GTAL. The segment covering 21 to 30 has biased composition (low complexity); it reads TTVSSTTTGG. Basic and acidic residues predominate over residues 79–161; that stretch reads RLEAEKAATK…AAEEAKRYAE (83 aa). Residues 162–175 are compositionally biased toward acidic residues; the sequence is ADDSDNESSSEDYS. Residues 200 to 210 show a composition bias toward basic residues; that stretch reads RGKNKVAKAKK. A compositionally biased stretch (basic and acidic residues) spans 211 to 237; that stretch reads GGRDDENSKNSKNERESNRKNQKDAKF. The tr-type G domain occupies 343–513; that stretch reads TRAPVVTIMG…LLQSEVLELT (171 aa). A G1 region spans residues 352 to 359; it reads GHVDHGKT. Position 352 to 359 (352 to 359) interacts with GTP; sequence GHVDHGKT. The interval 377–381 is G2; the sequence is GITQH. A G3 region spans residues 399-402; that stretch reads DTPG. GTP contacts are provided by residues 399–403 and 453–456; these read DTPGH and NKID. The tract at residues 453–456 is G4; sequence NKID. The tract at residues 489 to 491 is G5; sequence SAK.

This sequence belongs to the TRAFAC class translation factor GTPase superfamily. Classic translation factor GTPase family. IF-2 subfamily.

It localises to the cytoplasm. One of the essential components for the initiation of protein synthesis. Protects formylmethionyl-tRNA from spontaneous hydrolysis and promotes its binding to the 30S ribosomal subunits. Also involved in the hydrolysis of GTP during the formation of the 70S ribosomal complex. The protein is Translation initiation factor IF-2 of Haemophilus influenzae (strain 86-028NP).